Here is a 372-residue protein sequence, read N- to C-terminus: Ligninase H2 (372 aa).

The signal sequence occupies residues 1 to 21; the sequence is MAFKQLLAALSVALTLQVTQA. A propeptide spanning residues 22–28 is cleaved from the precursor; sequence APNLDKR. Disulfide bonds link Cys31–Cys44, Cys43–Cys314, Cys63–Cys149, and Cys278–Cys344. His76 functions as the Proton acceptor in the catalytic mechanism. Residues Asp77, Gly95, Asp97, and Ser99 each contribute to the Ca(2+) site. Position 205 (His205) interacts with heme b. Positions 206, 223, 225, 228, and 230 each coordinate Ca(2+). Asn286 is a glycosylation site (N-linked (GlcNAc...) asparagine).

Belongs to the peroxidase family. Ligninase subfamily. Requires heme b as cofactor. The cofactor is Ca(2+).

It catalyses the reaction 1-(3,4-dimethoxyphenyl)-2-(2-methoxyphenoxy)propane-1,3-diol + H2O2 = 3,4-dimethoxybenzaldehyde + guaiacol + glycolaldehyde + H2O. The enzyme catalyses 2 (3,4-dimethoxyphenyl)methanol + H2O2 = 2 (3,4-dimethoxyphenyl)methanol radical + 2 H2O. It participates in secondary metabolite metabolism; lignin degradation. In terms of biological role, depolymerization of lignin. Catalyzes the C(alpha)-C(beta) cleavage of the propyl side chains of lignin. This Phanerodontia chrysosporium (White-rot fungus) protein is Ligninase H2 (GLG4).